We begin with the raw amino-acid sequence, 344 residues long: Biotin synthase (344 aa).

The Radical SAM core domain maps to 40–267 (AEVQVSTLLS…KSMVRLSAGR (228 aa)). Positions 55, 59, and 62 each coordinate [4Fe-4S] cluster. Cys-99, Cys-130, Cys-190, and Arg-262 together coordinate [2Fe-2S] cluster.

Belongs to the radical SAM superfamily. Biotin synthase family. In terms of assembly, homodimer. It depends on [4Fe-4S] cluster as a cofactor. [2Fe-2S] cluster is required as a cofactor.

The enzyme catalyses (4R,5S)-dethiobiotin + (sulfur carrier)-SH + 2 reduced [2Fe-2S]-[ferredoxin] + 2 S-adenosyl-L-methionine = (sulfur carrier)-H + biotin + 2 5'-deoxyadenosine + 2 L-methionine + 2 oxidized [2Fe-2S]-[ferredoxin]. It functions in the pathway cofactor biosynthesis; biotin biosynthesis; biotin from 7,8-diaminononanoate: step 2/2. Functionally, catalyzes the conversion of dethiobiotin (DTB) to biotin by the insertion of a sulfur atom into dethiobiotin via a radical-based mechanism. The chain is Biotin synthase from Xanthomonas campestris pv. campestris (strain 8004).